The chain runs to 396 residues: Elongation factor Tu (396 aa).

Residues 10–206 form the tr-type G domain; that stretch reads KPHVNIGTIG…ACDTYIPAPV (197 aa). The interval 19–26 is G1; it reads GHVDHGKT. 19-26 provides a ligand contact to GTP; sequence GHVDHGKT. T26 contributes to the Mg(2+) binding site. A G2 region spans residues 60-64; the sequence is GITIS. Residues 81–84 form a G3 region; that stretch reads DCPG. Residues 81–85 and 136–139 contribute to the GTP site; these read DCPGH and NKVD. Residues 136–139 are G4; sequence NKVD. The tract at residues 174 to 176 is G5; it reads SAL.

It belongs to the TRAFAC class translation factor GTPase superfamily. Classic translation factor GTPase family. EF-Tu/EF-1A subfamily. As to quaternary structure, monomer.

Its subcellular location is the cytoplasm. The catalysed reaction is GTP + H2O = GDP + phosphate + H(+). Its function is as follows. GTP hydrolase that promotes the GTP-dependent binding of aminoacyl-tRNA to the A-site of ribosomes during protein biosynthesis. This is Elongation factor Tu from Bdellovibrio bacteriovorus (strain ATCC 15356 / DSM 50701 / NCIMB 9529 / HD100).